The sequence spans 57 residues: Benzylsuccinate synthase gamma subunit (57 aa).

In terms of assembly, heterohexamer composed of 2 alpha subunits, 2 beta subunits and 2 gamma subunits.

The catalysed reaction is toluene + fumarate = 2-benzylsuccinate. It participates in xenobiotic degradation; toluene degradation. Activated by the benzylsuccinate synthase activating enzyme BssD. Rapidly inactivated by oxygen. Functionally, catalyzes the addition of fumarate to the methyl group of toluene, leading to the formation of benzylsuccinate. This chain is Benzylsuccinate synthase gamma subunit (bssC), found in Thauera aromatica.